Reading from the N-terminus, the 348-residue chain is Heat-inducible transcription repressor HrcA (348 aa).

Belongs to the HrcA family.

Negative regulator of class I heat shock genes (grpE-dnaK-dnaJ and groELS operons). Prevents heat-shock induction of these operons. The polypeptide is Heat-inducible transcription repressor HrcA (Chlorobium chlorochromatii (strain CaD3)).